The primary structure comprises 357 residues: tRNA-specific 2-thiouridylase MnmA (357 aa).

ATP contacts are provided by residues 11–18 and leucine 37; that span reads AMSGGVDS. Cysteine 102 (nucleophile) is an active-site residue. Cysteine 102 and cysteine 197 are oxidised to a cystine. Glycine 126 provides a ligand contact to ATP. Residues 148-150 form an interaction with tRNA region; that stretch reads KDQ. Cysteine 197 functions as the Cysteine persulfide intermediate in the catalytic mechanism. The segment at 301 to 302 is interaction with tRNA; that stretch reads RY.

It belongs to the MnmA/TRMU family.

The protein resides in the cytoplasm. The enzyme catalyses S-sulfanyl-L-cysteinyl-[protein] + uridine(34) in tRNA + AH2 + ATP = 2-thiouridine(34) in tRNA + L-cysteinyl-[protein] + A + AMP + diphosphate + H(+). Catalyzes the 2-thiolation of uridine at the wobble position (U34) of tRNA, leading to the formation of s(2)U34. The sequence is that of tRNA-specific 2-thiouridylase MnmA from Dehalococcoides mccartyi (strain ATCC BAA-2266 / KCTC 15142 / 195) (Dehalococcoides ethenogenes (strain 195)).